The following is a 309-amino-acid chain: MGYKHKDLLGTRELSKEEILYFLDAAKEFKELNLKDIKKCEYLRGKTTINAFYENSTRTRTSFEIAAKRLGADTINFTASNSSVKKGETLNDTMNNMAAMKTDIIVLRHPSSGAAKFAAARTDASVVNAGDGTNEHPSQALLDLFTLLEYGKSLDKNTTVSIIGDIARSRVARSDIWAMKKFGINVKLFAPKMMIPKDAEVFESEICKNMEEACEGSDVIIMLRIQLERADGDVAFPSSREYSKFFGLNKNRIKLAKPDAIVLHPGPINRGVELNSDVADGTHSVILNQVENGVAVRMAILNTLINNRG.

The carbamoyl phosphate site is built by Arg58 and Thr59. Lys86 is a binding site for L-aspartate. Residues Arg108, His136, and Gln139 each coordinate carbamoyl phosphate. L-aspartate contacts are provided by Arg170 and Arg224. 2 residues coordinate carbamoyl phosphate: Gly266 and Pro267.

The protein belongs to the aspartate/ornithine carbamoyltransferase superfamily. ATCase family. Heterododecamer (2C3:3R2) of six catalytic PyrB chains organized as two trimers (C3), and six regulatory PyrI chains organized as three dimers (R2).

The catalysed reaction is carbamoyl phosphate + L-aspartate = N-carbamoyl-L-aspartate + phosphate + H(+). Its pathway is pyrimidine metabolism; UMP biosynthesis via de novo pathway; (S)-dihydroorotate from bicarbonate: step 2/3. Functionally, catalyzes the condensation of carbamoyl phosphate and aspartate to form carbamoyl aspartate and inorganic phosphate, the committed step in the de novo pyrimidine nucleotide biosynthesis pathway. The chain is Aspartate carbamoyltransferase catalytic subunit from Campylobacter curvus (strain 525.92).